The following is a 117-amino-acid chain: Immunoglobulin kappa variable 1D-17 (117 aa).

The N-terminal stretch at 1-22 (MDMRVPAQLLGLLLLWFPGARC) is a signal peptide. The tract at residues 23-45 (NIQMTQSPSAMSASVGDRVTITC) is framework-1. The Ig-like domain occupies 23–117 (NIQMTQSPSA…YYCLQHNSYP (95 aa)). Residues Cys45 and Cys110 are joined by a disulfide bond. The tract at residues 46 to 56 (RARQGISNYLA) is complementarity-determining-1. A framework-2 region spans residues 57–71 (WFQQKPGKVPKHLIY). Residues 72 to 78 (AASSLQS) are complementarity-determining-2. Residues 79-110 (GVPSRFSGSGSGTEFTLTISSLQPEDFATYYC) form a framework-3 region. The interval 111-117 (LQHNSYP) is complementarity-determining-3.

In terms of assembly, immunoglobulins are composed of two identical heavy chains and two identical light chains; disulfide-linked.

Its subcellular location is the secreted. The protein resides in the cell membrane. Functionally, v region of the variable domain of immunoglobulin light chains that participates in the antigen recognition. Immunoglobulins, also known as antibodies, are membrane-bound or secreted glycoproteins produced by B lymphocytes. In the recognition phase of humoral immunity, the membrane-bound immunoglobulins serve as receptors which, upon binding of a specific antigen, trigger the clonal expansion and differentiation of B lymphocytes into immunoglobulins-secreting plasma cells. Secreted immunoglobulins mediate the effector phase of humoral immunity, which results in the elimination of bound antigens. The antigen binding site is formed by the variable domain of one heavy chain, together with that of its associated light chain. Thus, each immunoglobulin has two antigen binding sites with remarkable affinity for a particular antigen. The variable domains are assembled by a process called V-(D)-J rearrangement and can then be subjected to somatic hypermutations which, after exposure to antigen and selection, allow affinity maturation for a particular antigen. The chain is Immunoglobulin kappa variable 1D-17 from Homo sapiens (Human).